Consider the following 388-residue polypeptide: Chorismate synthase (388 aa).

NADP(+) contacts are provided by arginine 39 and arginine 45. Residues 95–115 form a disordered region; sequence EKQKKIRRVSKPRPGHADLVG. Over residues 98-108 the composition is skewed to basic residues; it reads KKIRRVSKPRP. FMN-binding positions include 130–132, 251–252, glycine 296, 311–315, and arginine 337; these read RSS, NA, and KPIPT.

The protein belongs to the chorismate synthase family. Homotetramer. The cofactor is FMNH2.

The catalysed reaction is 5-O-(1-carboxyvinyl)-3-phosphoshikimate = chorismate + phosphate. It participates in metabolic intermediate biosynthesis; chorismate biosynthesis; chorismate from D-erythrose 4-phosphate and phosphoenolpyruvate: step 7/7. In terms of biological role, catalyzes the anti-1,4-elimination of the C-3 phosphate and the C-6 proR hydrogen from 5-enolpyruvylshikimate-3-phosphate (EPSP) to yield chorismate, which is the branch point compound that serves as the starting substrate for the three terminal pathways of aromatic amino acid biosynthesis. This reaction introduces a second double bond into the aromatic ring system. In Enterococcus faecalis (strain ATCC 700802 / V583), this protein is Chorismate synthase.